A 92-amino-acid polypeptide reads, in one-letter code: RNA-binding protein Hfq (92 aa).

A Sm domain is found at 9-68 (DPFLNALRRERVPVSIYLVNGIKLQGQVESFDQFVILLKNTVSQMVYKHAISTVVPSRPF).

Belongs to the Hfq family. In terms of assembly, homohexamer.

In terms of biological role, RNA chaperone that binds small regulatory RNA (sRNAs) and mRNAs to facilitate mRNA translational regulation in response to envelope stress, environmental stress and changes in metabolite concentrations. Also binds with high specificity to tRNAs. The chain is RNA-binding protein Hfq from Shewanella halifaxensis (strain HAW-EB4).